A 398-amino-acid polypeptide reads, in one-letter code: Transcription factor kk1f (398 aa).

Residues 1–28 (MTFVETVAVPDNEERPSAGHNRPVADST) form a disordered region. Residues 31-62 (PNAREMKVQNRVAQRTHHRRLKTKLEVLRERL) enclose the bZIP domain. The tract at residues 34-50 (REMKVQNRVAQRTHHRR) is basic motif. Positions 51-58 (LKTKLEVL) are leucine-zipper.

The protein belongs to the bZIP family.

The protein localises to the nucleus. It functions in the pathway secondary metabolite biosynthesis. Functionally, transcription factor; part of the gene cluster that mediates the biosynthesis of KK-1, a novel cyclic depsipeptide with 10 residues which is a promising active compound with high activity against many plant pathogens, especially Botrytis cinerea. Positively regulates the expression of all the genes from the KK-1 biosynthesis gene cluster. The polypeptide is Transcription factor kk1f (Curvularia clavata).